Reading from the N-terminus, the 450-residue chain is Divalent metal cation transporter MntH (450 aa).

Helical transmembrane passes span 34-54, 61-81, 108-128, 141-161, 170-190, 212-232, 263-283, 305-325, 361-381, 383-403, and 422-442; these read LSFL…GNWI, AQYG…AMLL, IAII…IAEV, IPLI…LFIM, AIVG…VYIS, GILY…NLYL, IQLS…ASLF, PVLG…ALLA, SLAV…AAKI, QLLV…LIPL, and VNII…YLIV.

Belongs to the NRAMP family.

It localises to the cell membrane. Its function is as follows. H(+)-stimulated, divalent metal cation uptake system. This chain is Divalent metal cation transporter MntH, found in Staphylococcus aureus (strain JH1).